Reading from the N-terminus, the 188-residue chain is Putative nucleotidase OB0422 (188 aa).

Belongs to the 5'(3')-deoxyribonucleotidase family.

The chain is Putative nucleotidase OB0422 from Oceanobacillus iheyensis (strain DSM 14371 / CIP 107618 / JCM 11309 / KCTC 3954 / HTE831).